The following is a 147-amino-acid chain: Microsomal glutathione S-transferase 2 (147 aa).

The next 3 membrane-spanning stretches (helical) occupy residues 6 to 26, 62 to 82, and 107 to 127; these read SLLA…AWRV, VFIV…AACL, and GFRL…LGVA.

In terms of assembly, homotrimer.

The protein resides in the endoplasmic reticulum membrane. The protein localises to the microsome membrane. It carries out the reaction RX + glutathione = an S-substituted glutathione + a halide anion + H(+). It catalyses the reaction 1-chloro-2,4-dinitrobenzene + glutathione = 2,4-dinitrophenyl-S-glutathione + chloride + H(+). The enzyme catalyses leukotriene C4 = leukotriene A4 + glutathione. The catalysed reaction is (5S)-hydroperoxy-(6E,8Z,11Z,14Z)-eicosatetraenoate + 2 glutathione = (5S)-hydroxy-(6E,8Z,11Z,14Z)-eicosatetraenoate + glutathione disulfide + H2O. Each monomer binds on GSH molecule but only one subunit is catalytically active. In terms of biological role, catalyzes several different glutathione-dependent reactions. Catalyzes the glutathione-dependent reduction of lipid hydroperoxides, such as 5-HPETE. Has glutathione transferase activity, toward xenobiotic electrophiles, such as 1-chloro-2, 4-dinitrobenzene (CDNB). Also catalyzes the conjugation of leukotriene A4 with reduced glutathione to form leukotriene C4 (LTC4). Involved in oxidative DNA damage induced by ER stress and anticancer agents by activating LTC4 biosynthetic machinery in nonimmune cells. This is Microsomal glutathione S-transferase 2 from Mus musculus (Mouse).